A 276-amino-acid polypeptide reads, in one-letter code: 3-methyl-2-oxobutanoate hydroxymethyltransferase (276 aa).

Asp-45 and Asp-84 together coordinate Mg(2+). 3-methyl-2-oxobutanoate contacts are provided by residues Asp-45 to Ser-46, Asp-84, and Lys-114. Glu-116 serves as a coordination point for Mg(2+). Catalysis depends on Glu-183, which acts as the Proton acceptor.

It belongs to the PanB family. In terms of assembly, homodecamer; pentamer of dimers. It depends on Mg(2+) as a cofactor.

It localises to the cytoplasm. It catalyses the reaction 3-methyl-2-oxobutanoate + (6R)-5,10-methylene-5,6,7,8-tetrahydrofolate + H2O = 2-dehydropantoate + (6S)-5,6,7,8-tetrahydrofolate. It functions in the pathway cofactor biosynthesis; (R)-pantothenate biosynthesis; (R)-pantoate from 3-methyl-2-oxobutanoate: step 1/2. In terms of biological role, catalyzes the reversible reaction in which hydroxymethyl group from 5,10-methylenetetrahydrofolate is transferred onto alpha-ketoisovalerate to form ketopantoate. The polypeptide is 3-methyl-2-oxobutanoate hydroxymethyltransferase (Carboxydothermus hydrogenoformans (strain ATCC BAA-161 / DSM 6008 / Z-2901)).